The primary structure comprises 216 residues: 3-isopropylmalate dehydratase small subunit 1 (216 aa).

It belongs to the LeuD family. LeuD type 1 subfamily. As to quaternary structure, heterodimer of LeuC and LeuD.

It carries out the reaction (2R,3S)-3-isopropylmalate = (2S)-2-isopropylmalate. It functions in the pathway amino-acid biosynthesis; L-leucine biosynthesis; L-leucine from 3-methyl-2-oxobutanoate: step 2/4. Its function is as follows. Catalyzes the isomerization between 2-isopropylmalate and 3-isopropylmalate, via the formation of 2-isopropylmaleate. The polypeptide is 3-isopropylmalate dehydratase small subunit 1 (Bordetella bronchiseptica (strain ATCC BAA-588 / NCTC 13252 / RB50) (Alcaligenes bronchisepticus)).